An 87-amino-acid polypeptide reads, in one-letter code: Acyl-CoA-binding protein (87 aa).

Ser2 bears the N-acetylserine mark. One can recognise an ACB domain in the interval 2 to 87 (SQAEFDKAAE…VEELKKKYGI (86 aa)). An N6-acetyllysine; alternate modification is found at Lys8. Position 8 is an N6-succinyllysine; alternate (Lys8). Lys14 contacts an acyl-CoA. Lys17 carries the N6-succinyllysine modification. Lys19 is modified (N6-acetyllysine). Tyr29 carries the post-translational modification Phosphotyrosine. An acyl-CoA contacts are provided by residues 29 to 33 (YSHYK), Lys51, Lys55, and Tyr74. Lys51 bears the N6-acetyllysine mark. Lys55 is modified (N6-acetyllysine; alternate). Lys55 is subject to N6-succinyllysine; alternate. Lys55 is modified (N6-(2-hydroxyisobutyryl)lysine; alternate). Lys55 carries the N6-malonyllysine; alternate modification. N6-acetyllysine; alternate is present on Lys77. Residue Lys77 is modified to N6-succinyllysine; alternate.

The protein belongs to the ACBP family. Monomer.

The protein resides in the endoplasmic reticulum. The protein localises to the golgi apparatus. In terms of biological role, binds medium- and long-chain acyl-CoA esters with very high affinity and may function as an intracellular carrier of acyl-CoA esters. It is also able to displace diazepam from the benzodiazepine (BZD) recognition site located on the GABA type A receptor. It is therefore possible that this protein also acts as a neuropeptide to modulate the action of the GABA receptor. The chain is Acyl-CoA-binding protein (DBI) from Bos taurus (Bovine).